Here is a 362-residue protein sequence, read N- to C-terminus: Probable cysteine protease RDL2 (362 aa).

The N-terminal stretch at 1-28 (MAATPIRVIVSALVILSVLLLSSSLGVA) is a signal peptide. Positions 29–129 (TETEIERNET…ERYLYKEGDV (101 aa)) are cleaved as a propeptide — activation peptide. Asparagine 36 carries an N-linked (GlcNAc...) asparagine glycan. 2 cysteine pairs are disulfide-bonded: cysteine 151–cysteine 194 and cysteine 185–cysteine 228. Cysteine 154 is a catalytic residue. Asparagine 234 carries an N-linked (GlcNAc...) asparagine glycan. Cysteines 287 and 338 form a disulfide. Active-site residues include histidine 293 and asparagine 313.

Belongs to the peptidase C1 family.

Probable thiol protease. The protein is Probable cysteine protease RDL2 of Arabidopsis thaliana (Mouse-ear cress).